A 197-amino-acid chain; its full sequence is MDMQSRIRQLFQASIDTKQQAMDVLAPHIEQASQVMVNALLNEGKMLSCGNGGSAGDAQHFSSELLNRFERERPSLPAIALTTDSSTITSIANDYSYNEIFSKQIRALGQPGDVLLAISTSGNSANIIQAIQAAHDREMIVVALTGRDGGGMASLLLPEDVEIRVPANVTARIQEVHLLAIHCLCDLIDSQLFGSEE.

The SIS domain occupies 36-197 (MVNALLNEGK…IDSQLFGSEE (162 aa)). Position 51-53 (51-53 (NGG)) interacts with substrate. Zn(2+) contacts are provided by histidine 60 and glutamate 64. Substrate-binding positions include glutamate 64, 93-94 (ND), 119-121 (STS), serine 124, and glutamine 174. 2 residues coordinate Zn(2+): glutamine 174 and histidine 182.

The protein belongs to the SIS family. GmhA subfamily. As to quaternary structure, homotetramer. Requires Zn(2+) as cofactor.

It is found in the cytoplasm. The enzyme catalyses 2 D-sedoheptulose 7-phosphate = D-glycero-alpha-D-manno-heptose 7-phosphate + D-glycero-beta-D-manno-heptose 7-phosphate. It functions in the pathway carbohydrate biosynthesis; D-glycero-D-manno-heptose 7-phosphate biosynthesis; D-glycero-alpha-D-manno-heptose 7-phosphate and D-glycero-beta-D-manno-heptose 7-phosphate from sedoheptulose 7-phosphate: step 1/1. In terms of biological role, catalyzes the isomerization of sedoheptulose 7-phosphate in D-glycero-D-manno-heptose 7-phosphate. In Pseudomonas fluorescens (strain SBW25), this protein is Phosphoheptose isomerase.